Consider the following 673-residue polypeptide: DNA ligase (673 aa).

NAD(+)-binding positions include aspartate 33–aspartate 37, serine 83–leucine 84, and glutamate 117. Catalysis depends on lysine 119, which acts as the N6-AMP-lysine intermediate. Positions 140, 175, 282, and 306 each coordinate NAD(+). Zn(2+) contacts are provided by cysteine 400, cysteine 403, cysteine 418, and cysteine 424. Positions arginine 592–serine 673 constitute a BRCT domain.

The protein belongs to the NAD-dependent DNA ligase family. LigA subfamily. Mg(2+) serves as cofactor. Requires Mn(2+) as cofactor.

The enzyme catalyses NAD(+) + (deoxyribonucleotide)n-3'-hydroxyl + 5'-phospho-(deoxyribonucleotide)m = (deoxyribonucleotide)n+m + AMP + beta-nicotinamide D-nucleotide.. Functionally, DNA ligase that catalyzes the formation of phosphodiester linkages between 5'-phosphoryl and 3'-hydroxyl groups in double-stranded DNA using NAD as a coenzyme and as the energy source for the reaction. It is essential for DNA replication and repair of damaged DNA. The protein is DNA ligase of Anaplasma marginale (strain St. Maries).